The sequence spans 155 residues: Mitochondrial import protein 1 (155 aa).

The protein belongs to the MIM1 family.

It is found in the mitochondrion outer membrane. Its function is as follows. Required for the assembly of the TOM (translocase of outer membrane) receptor complex, which is responsible for the recognition and translocation of cytosolically synthesized mitochondrial preproteins. This Eremothecium gossypii (strain ATCC 10895 / CBS 109.51 / FGSC 9923 / NRRL Y-1056) (Yeast) protein is Mitochondrial import protein 1.